The chain runs to 508 residues: Photosystem II CP47 reaction center protein (508 aa).

6 consecutive transmembrane segments (helical) span residues 21–36 (SVHIMHTALVSGWAGS), 101–115 (IVFSGLCFLAAIWHW), 140–156 (GIHLFLSGVACFGFGAF), 203–218 (IAAGTLGILAGLFHLS), 237–252 (VLSSSIAAVFFAAFVV), and 457–472 (SFALLFFFGHIWHGAR).

Belongs to the PsbB/PsbC family. PsbB subfamily. PSII is composed of 1 copy each of membrane proteins PsbA, PsbB, PsbC, PsbD, PsbE, PsbF, PsbH, PsbI, PsbJ, PsbK, PsbL, PsbM, PsbT, PsbX, PsbY, PsbZ, Psb30/Ycf12, at least 3 peripheral proteins of the oxygen-evolving complex and a large number of cofactors. It forms dimeric complexes. It depends on Binds multiple chlorophylls. PSII binds additional chlorophylls, carotenoids and specific lipids. as a cofactor.

It localises to the plastid. Its subcellular location is the chloroplast thylakoid membrane. One of the components of the core complex of photosystem II (PSII). It binds chlorophyll and helps catalyze the primary light-induced photochemical processes of PSII. PSII is a light-driven water:plastoquinone oxidoreductase, using light energy to abstract electrons from H(2)O, generating O(2) and a proton gradient subsequently used for ATP formation. The polypeptide is Photosystem II CP47 reaction center protein (Illicium oligandrum (Star anise)).